Consider the following 470-residue polypeptide: Sulfate adenylyltransferase subunit 1 (470 aa).

A tr-type G domain is found at 22 to 238 (KELLRFITCG…ETIKIDYAYT (217 aa)). Residues 31–38 (GSVDDGKS) are G1. Residue 31 to 38 (GSVDDGKS) coordinates GTP. The interval 89–93 (GITID) is G2. The tract at residues 110–113 (DTPG) is G3. Residues 110 to 114 (DTPGH) and 165 to 168 (NKMD) contribute to the GTP site. Residues 165-168 (NKMD) are G4. The G5 stretch occupies residues 202–204 (SAL).

This sequence belongs to the TRAFAC class translation factor GTPase superfamily. Classic translation factor GTPase family. CysN/NodQ subfamily. As to quaternary structure, heterodimer composed of CysD, the smaller subunit, and CysN.

The catalysed reaction is sulfate + ATP + H(+) = adenosine 5'-phosphosulfate + diphosphate. It functions in the pathway sulfur metabolism; hydrogen sulfide biosynthesis; sulfite from sulfate: step 1/3. In terms of biological role, with CysD forms the ATP sulfurylase (ATPS) that catalyzes the adenylation of sulfate producing adenosine 5'-phosphosulfate (APS) and diphosphate, the first enzymatic step in sulfur assimilation pathway. APS synthesis involves the formation of a high-energy phosphoric-sulfuric acid anhydride bond driven by GTP hydrolysis by CysN coupled to ATP hydrolysis by CysD. The sequence is that of Sulfate adenylyltransferase subunit 1 from Francisella tularensis subsp. tularensis (strain SCHU S4 / Schu 4).